A 408-amino-acid chain; its full sequence is MDKKKAPGQTVASSNWLQLQSTLSTITKEKDVSNSKAHNSRSSQSPSSSLRSSSRIQRKSKHSQGVGQYMGRVEVASTAKTTVSQLRKGKVISNEPCILLEAFSDSPLLHELRHMVLGNHLLSESQKEPGQYLAIDCEMVGVGPNGMENTLARVSIVNYHGAVILDTFVQPREPVTDYRTWISGVKQSDLLGAPQFDEVNKQVANLLHDKILIGHAIDNDLKVLMLTHPGPLTRDTQKYKPLQEIAKNKRPGLKKLSELLLGVQIQTGAHSSVVDARVAMALYRLHKKEWERSVWRQTEAYRSISSVNKPEHVLGKRGHDEKEAEDGEETAGESKRKNRKKSGNGGGRQQFPGGGRKGISSGLDVIVRRNGQRVDENGRGDGTSRRKAGRGEISTFTGGESWWEQPAA.

The interval 27–70 (TKEKDVSNSKAHNSRSSQSPSSSLRSSSRIQRKSKHSQGVGQYM) is disordered. Low complexity predominate over residues 40–55 (SRSSQSPSSSLRSSSR). The Exonuclease domain occupies 131-292 (QYLAIDCEMV…YRLHKKEWER (162 aa)). Residues 310-322 (PEHVLGKRGHDEK) show a composition bias toward basic and acidic residues. Positions 310-408 (PEHVLGKRGH…GESWWEQPAA (99 aa)) are disordered. A compositionally biased stretch (gly residues) spans 343–357 (GNGGGRQQFPGGGRK). The span at 372–384 (QRVDENGRGDGTS) shows a compositional bias: basic and acidic residues.

This sequence belongs to the REXO4 family.

It localises to the nucleus. Its function is as follows. Exoribonuclease involved in ribosome biosynthesis. Involved in the processing of ITS1, the internal transcribed spacer localized between the 18S and 5.8S rRNAs. This Cryptococcus neoformans var. neoformans serotype D (strain B-3501A) (Filobasidiella neoformans) protein is RNA exonuclease 4 (REX4).